The sequence spans 462 residues: Dipeptidyl peptidase 1 (462 aa).

Positions 1–24 are cleaved as a signal peptide; it reads MGPWTHSLRAALLLVLLGVCTVSS. N-linked (GlcNAc...) asparagine glycosylation is found at asparagine 29 and asparagine 53. 2 cysteine pairs are disulfide-bonded: cysteine 30-cysteine 118 and cysteine 54-cysteine 136. Positions 135–229 are excised as a propeptide; it reads ACFVGKKMAN…TDEIQQQILS (95 aa). The N-linked (GlcNAc...) asparagine glycan is linked to asparagine 144. Intrachain disulfides connect cysteine 254–cysteine 297, cysteine 290–cysteine 330, and cysteine 320–cysteine 336. Residue cysteine 257 is part of the active site. An N-linked (GlcNAc...) asparagine glycan is attached at asparagine 275. Chloride contacts are provided by phenylalanine 301 and tyrosine 303. Tyrosine 346 serves as a coordination point for chloride. Active-site residues include histidine 404 and asparagine 426.

Belongs to the peptidase C1 family. As to quaternary structure, tetramer of heterotrimers consisting of exclusion domain, heavy- and light chains. Requires chloride as cofactor. Broadly distributed, but higher levels found in liver, spleen, intestine, lung and kidney.

The protein localises to the lysosome. The enzyme catalyses Release of an N-terminal dipeptide, Xaa-Yaa-|-Zaa-, except when Xaa is Arg or Lys, or Yaa or Zaa is Pro.. Thiol protease. Has dipeptidylpeptidase activity. Active against a broad range of dipeptide substrates composed of both polar and hydrophobic amino acids. Proline cannot occupy the P1 position and arginine cannot occupy the P2 position of the substrate. Can act as both an exopeptidase and endopeptidase. Activates serine proteases such as elastase, cathepsin G and granzymes A and B. In Rattus norvegicus (Rat), this protein is Dipeptidyl peptidase 1 (Ctsc).